Reading from the N-terminus, the 293-residue chain is Lipoyl synthase (293 aa).

Cys-38, Cys-43, Cys-49, Cys-64, Cys-68, Cys-71, and Ser-277 together coordinate [4Fe-4S] cluster. A Radical SAM core domain is found at Trp-50–Arg-266.

Belongs to the radical SAM superfamily. Lipoyl synthase family. [4Fe-4S] cluster is required as a cofactor.

The protein localises to the cytoplasm. It catalyses the reaction [[Fe-S] cluster scaffold protein carrying a second [4Fe-4S](2+) cluster] + N(6)-octanoyl-L-lysyl-[protein] + 2 oxidized [2Fe-2S]-[ferredoxin] + 2 S-adenosyl-L-methionine + 4 H(+) = [[Fe-S] cluster scaffold protein] + N(6)-[(R)-dihydrolipoyl]-L-lysyl-[protein] + 4 Fe(3+) + 2 hydrogen sulfide + 2 5'-deoxyadenosine + 2 L-methionine + 2 reduced [2Fe-2S]-[ferredoxin]. The protein operates within protein modification; protein lipoylation via endogenous pathway; protein N(6)-(lipoyl)lysine from octanoyl-[acyl-carrier-protein]: step 2/2. Functionally, catalyzes the radical-mediated insertion of two sulfur atoms into the C-6 and C-8 positions of the octanoyl moiety bound to the lipoyl domains of lipoate-dependent enzymes, thereby converting the octanoylated domains into lipoylated derivatives. The chain is Lipoyl synthase from Chlorobium chlorochromatii (strain CaD3).